Reading from the N-terminus, the 556-residue chain is 2-succinyl-5-enolpyruvyl-6-hydroxy-3-cyclohexene-1-carboxylate synthase (556 aa).

The protein belongs to the TPP enzyme family. MenD subfamily. In terms of assembly, homodimer. Requires Mg(2+) as cofactor. Mn(2+) serves as cofactor. The cofactor is thiamine diphosphate.

It carries out the reaction isochorismate + 2-oxoglutarate + H(+) = 5-enolpyruvoyl-6-hydroxy-2-succinyl-cyclohex-3-ene-1-carboxylate + CO2. Its pathway is quinol/quinone metabolism; 1,4-dihydroxy-2-naphthoate biosynthesis; 1,4-dihydroxy-2-naphthoate from chorismate: step 2/7. It participates in quinol/quinone metabolism; menaquinone biosynthesis. Its function is as follows. Catalyzes the thiamine diphosphate-dependent decarboxylation of 2-oxoglutarate and the subsequent addition of the resulting succinic semialdehyde-thiamine pyrophosphate anion to isochorismate to yield 2-succinyl-5-enolpyruvyl-6-hydroxy-3-cyclohexene-1-carboxylate (SEPHCHC). The polypeptide is 2-succinyl-5-enolpyruvyl-6-hydroxy-3-cyclohexene-1-carboxylate synthase (Salmonella typhi).